Consider the following 199-residue polypeptide: Shikimate kinase (199 aa).

34–39 (GAGKTA) contributes to the ATP binding site. Thr-38 contributes to the Mg(2+) binding site. Substrate-binding residues include Asp-56, Arg-80, and Gly-102. Arg-140 serves as a coordination point for ATP. A substrate-binding site is contributed by Arg-159.

Belongs to the shikimate kinase family. Monomer. It depends on Mg(2+) as a cofactor.

It localises to the cytoplasm. The catalysed reaction is shikimate + ATP = 3-phosphoshikimate + ADP + H(+). Its pathway is metabolic intermediate biosynthesis; chorismate biosynthesis; chorismate from D-erythrose 4-phosphate and phosphoenolpyruvate: step 5/7. Functionally, catalyzes the specific phosphorylation of the 3-hydroxyl group of shikimic acid using ATP as a cosubstrate. The sequence is that of Shikimate kinase from Cereibacter sphaeroides (strain ATCC 17023 / DSM 158 / JCM 6121 / CCUG 31486 / LMG 2827 / NBRC 12203 / NCIMB 8253 / ATH 2.4.1.) (Rhodobacter sphaeroides).